A 477-amino-acid chain; its full sequence is Transposase for insertion sequence element IS231F (477 aa).

The protein belongs to the transposase 11 family.

In terms of biological role, involved in the transposition of the insertion sequence. The protein is Transposase for insertion sequence element IS231F of Bacillus thuringiensis subsp. israelensis.